We begin with the raw amino-acid sequence, 216 residues long: uncharacterized protein (216 aa).

The helical transmembrane segment at 5 to 22 threads the bilayer; that stretch reads LGLVFGSVILIYLISLFL.

It localises to the membrane. This is an uncharacterized protein from Aquifex aeolicus (strain VF5).